The following is a 483-amino-acid chain: Glycogen synthase (483 aa).

Position 18 (Lys18) interacts with ADP-alpha-D-glucose.

It belongs to the glycosyltransferase 1 family. Bacterial/plant glycogen synthase subfamily.

The catalysed reaction is [(1-&gt;4)-alpha-D-glucosyl](n) + ADP-alpha-D-glucose = [(1-&gt;4)-alpha-D-glucosyl](n+1) + ADP + H(+). Its pathway is glycan biosynthesis; glycogen biosynthesis. In terms of biological role, synthesizes alpha-1,4-glucan chains using ADP-glucose. This is Glycogen synthase from Rhodopseudomonas palustris (strain ATCC BAA-98 / CGA009).